Reading from the N-terminus, the 149-residue chain is Nucleoside diphosphate kinase (149 aa).

Residues K9, F57, R85, T91, R102, and N112 each coordinate ATP. H115 (pros-phosphohistidine intermediate) is an active-site residue.

The protein belongs to the NDK family. It depends on Mg(2+) as a cofactor.

The protein localises to the cytoplasm. It carries out the reaction a 2'-deoxyribonucleoside 5'-diphosphate + ATP = a 2'-deoxyribonucleoside 5'-triphosphate + ADP. The catalysed reaction is a ribonucleoside 5'-diphosphate + ATP = a ribonucleoside 5'-triphosphate + ADP. Its function is as follows. Major role in the synthesis of nucleoside triphosphates other than ATP. The ATP gamma phosphate is transferred to the NDP beta phosphate via a ping-pong mechanism, using a phosphorylated active-site intermediate. This is Nucleoside diphosphate kinase from Methanosarcina barkeri (strain Fusaro / DSM 804).